A 929-amino-acid chain; its full sequence is Dual specificity protein phosphatase PHS1 (929 aa).

Disordered stretches follow at residues 1–27 (MAEP…LVHD) and 545–618 (PESP…SLSS). 2 stretches are compositionally biased toward basic and acidic residues: residues 552–580 (HGHE…ESDM) and 591–606 (ENKE…ESWH). The Tyrosine-protein phosphatase domain maps to 703-848 (KPSMIQENLF…LINLDKKCHG (146 aa)). Cys-792 serves as the catalytic Phosphocysteine intermediate. 792–798 (CFEGRSR) is a binding site for substrate. Residues 903–911 (QKALEALKL) carry the Nuclear export signal motif.

In terms of assembly, interacts with MPK18. In terms of tissue distribution, expressed in roots, leaves and flowers.

Its subcellular location is the cytoplasm. It carries out the reaction O-phospho-L-seryl-[protein] + H2O = L-seryl-[protein] + phosphate. It catalyses the reaction O-phospho-L-threonyl-[protein] + H2O = L-threonyl-[protein] + phosphate. The enzyme catalyses O-phospho-L-tyrosyl-[protein] + H2O = L-tyrosyl-[protein] + phosphate. In terms of biological role, probable dual specificity phosphatase that binds and dephosphorylates MPK18, modulating the organization and dynamics of cortical microtubules. Acts as a negative regulator of abscisic acid (ABA) signaling during seed germination and light-induced stomata aperture. This is Dual specificity protein phosphatase PHS1 (PHS1) from Arabidopsis thaliana (Mouse-ear cress).